The sequence spans 396 residues: Phosphopentomutase (396 aa).

The Mn(2+) site is built by Asp-13, Asp-288, His-293, Asp-329, His-330, and His-341.

Belongs to the phosphopentomutase family. Mn(2+) serves as cofactor.

Its subcellular location is the cytoplasm. The enzyme catalyses 2-deoxy-alpha-D-ribose 1-phosphate = 2-deoxy-D-ribose 5-phosphate. The catalysed reaction is alpha-D-ribose 1-phosphate = D-ribose 5-phosphate. The protein operates within carbohydrate degradation; 2-deoxy-D-ribose 1-phosphate degradation; D-glyceraldehyde 3-phosphate and acetaldehyde from 2-deoxy-alpha-D-ribose 1-phosphate: step 1/2. Functionally, isomerase that catalyzes the conversion of deoxy-ribose 1-phosphate (dRib-1-P) and ribose 1-phosphate (Rib-1-P) to deoxy-ribose 5-phosphate (dRib-5-P) and ribose 5-phosphate (Rib-5-P), respectively. The sequence is that of Phosphopentomutase from Clostridium botulinum (strain Alaska E43 / Type E3).